We begin with the raw amino-acid sequence, 212 residues long: uncharacterized protein (212 aa).

Residues 46–198 (LERVYREKRK…IYSLMTRLGI (153 aa)) enclose the SIS domain.

Belongs to the SIS family. PHI subfamily.

This is an uncharacterized protein from Aeropyrum pernix (strain ATCC 700893 / DSM 11879 / JCM 9820 / NBRC 100138 / K1).